Here is a 944-residue protein sequence, read N- to C-terminus: 2-oxoglutarate dehydrogenase E1 component (944 aa).

The tract at residues arginine 915 to asparagine 944 is disordered. The segment covering proline 925–valine 936 has biased composition (basic and acidic residues).

It belongs to the alpha-ketoglutarate dehydrogenase family. As to quaternary structure, homodimer. Part of the 2-oxoglutarate dehydrogenase (OGDH) complex composed of E1 (2-oxoglutarate dehydrogenase), E2 (dihydrolipoamide succinyltransferase) and E3 (dihydrolipoamide dehydrogenase); the complex contains multiple copies of the three enzymatic components (E1, E2 and E3). Requires thiamine diphosphate as cofactor.

It carries out the reaction N(6)-[(R)-lipoyl]-L-lysyl-[protein] + 2-oxoglutarate + H(+) = N(6)-[(R)-S(8)-succinyldihydrolipoyl]-L-lysyl-[protein] + CO2. In terms of biological role, E1 component of the 2-oxoglutarate dehydrogenase (OGDH) complex which catalyzes the decarboxylation of 2-oxoglutarate, the first step in the conversion of 2-oxoglutarate to succinyl-CoA and CO(2). In Bacillus velezensis (strain DSM 23117 / BGSC 10A6 / LMG 26770 / FZB42) (Bacillus amyloliquefaciens subsp. plantarum), this protein is 2-oxoglutarate dehydrogenase E1 component.